A 264-amino-acid chain; its full sequence is Thymidylate synthase (264 aa).

Residue Arg-21 coordinates dUMP. (6R)-5,10-methylene-5,6,7,8-tetrahydrofolate is bound at residue His-51. A dUMP-binding site is contributed by Arg-126–Arg-127. Cys-146 (nucleophile) is an active-site residue. DUMP-binding positions include Arg-166–Asp-169, Asn-177, and His-207–Tyr-209. Asp-169 provides a ligand contact to (6R)-5,10-methylene-5,6,7,8-tetrahydrofolate. Ala-263 lines the (6R)-5,10-methylene-5,6,7,8-tetrahydrofolate pocket.

The protein belongs to the thymidylate synthase family. Bacterial-type ThyA subfamily. In terms of assembly, homodimer.

It is found in the cytoplasm. It carries out the reaction dUMP + (6R)-5,10-methylene-5,6,7,8-tetrahydrofolate = 7,8-dihydrofolate + dTMP. Its pathway is pyrimidine metabolism; dTTP biosynthesis. Catalyzes the reductive methylation of 2'-deoxyuridine-5'-monophosphate (dUMP) to 2'-deoxythymidine-5'-monophosphate (dTMP) while utilizing 5,10-methylenetetrahydrofolate (mTHF) as the methyl donor and reductant in the reaction, yielding dihydrofolate (DHF) as a by-product. This enzymatic reaction provides an intracellular de novo source of dTMP, an essential precursor for DNA biosynthesis. This Brucella ovis (strain ATCC 25840 / 63/290 / NCTC 10512) protein is Thymidylate synthase.